Here is a 368-residue protein sequence, read N- to C-terminus: MSAQSVEEDSILIIPNPDEEEKILRVKLEEDPDGEEGSSISWNHLPDPEVFRQRFRQFGYQDSPGPREAVSQLRELCRLWLRPETHTKEQILELVVLEQFVAILPKELQTWVREHHPENGEEAVAVLEDLESELDDPGQPVSLRRQKREVLVEEITSQEDAQGLPSSELDAVENQLKWASWELHSLRHCDDDATTENGALAPKQEMASAGESHEGPGTLNIGVPQLFKYGETCFPKGRFERKRNPSRKKQHICDECGKHFSQGSALILHQRIHSGEKPYGCVECGKAFSRSSILVQHQRVHTGEKPYKCLECGKAFSQNSGLINHQRIHTGEKPYECVQCGKSYSQSSNLFRHQRRHNAEKLLNVVKV.

A Glycyl lysine isopeptide (Lys-Gly) (interchain with G-Cter in SUMO2) cross-link involves residue lysine 22. Lysine 27 participates in a covalent cross-link: Glycyl lysine isopeptide (Lys-Gly) (interchain with G-Cter in SUMO1); alternate. Lysine 27 participates in a covalent cross-link: Glycyl lysine isopeptide (Lys-Gly) (interchain with G-Cter in SUMO2); alternate. Residues 52 to 134 (RQRFRQFGYQ…AVLEDLESEL (83 aa)) enclose the SCAN box domain. 2 positions are modified to phosphoserine: serine 132 and serine 142. Residues lysine 147, lysine 177, and lysine 236 each participate in a glycyl lysine isopeptide (Lys-Gly) (interchain with G-Cter in SUMO2) cross-link. The C2H2-type 1 zinc-finger motif lies at 251 to 273 (HICDECGKHFSQGSALILHQRIH). A necessary and sufficient for nuclear localization region spans residues 251 to 301 (HICDECGKHFSQGSALILHQRIHSGEKPYGCVECGKAFSRSSILVQHQRVH). Phosphoserine is present on serine 274. Residues lysine 277 and lysine 286 each participate in a glycyl lysine isopeptide (Lys-Gly) (interchain with G-Cter in SUMO2) cross-link. 3 C2H2-type zinc fingers span residues 279 to 301 (YGCV…QRVH), 307 to 329 (YKCL…QRIH), and 335 to 357 (YECV…QRRH). Position 292 is a phosphoserine (serine 292). Tyrosine 335 bears the Phosphotyrosine mark. Residues lysine 361 and lysine 367 each participate in a glycyl lysine isopeptide (Lys-Gly) (interchain with G-Cter in SUMO2) cross-link.

The protein belongs to the krueppel C2H2-type zinc-finger protein family. In terms of processing, sumoylated. Widely expressed with highest levels in heart, brain, liver, skeletal muscle, kidney and testis and very low levels in spleen and lung.

It localises to the nucleus. Its function is as follows. Transcription factor required for myelination of differentiated oligodendrocytes. Required for the conversion of oligodendrocytes from the premyelinating to the myelinating state. In the developing central nervous system (CNS), involved in the maintenance in the progenitor stage by promoting the cell cycle. Specifically binds to the 5'-TCAT-3' DNA sequence. Has transcription repressor activity in vitro. The chain is Zinc finger protein 24 from Mus musculus (Mouse).